The chain runs to 288 residues: ATP synthase gamma chain (288 aa).

It belongs to the ATPase gamma chain family. F-type ATPases have 2 components, CF(1) - the catalytic core - and CF(0) - the membrane proton channel. CF(1) has five subunits: alpha(3), beta(3), gamma(1), delta(1), epsilon(1). CF(0) has three main subunits: a, b and c.

The protein localises to the cell inner membrane. In terms of biological role, produces ATP from ADP in the presence of a proton gradient across the membrane. The gamma chain is believed to be important in regulating ATPase activity and the flow of protons through the CF(0) complex. In Blochmanniella floridana, this protein is ATP synthase gamma chain.